A 679-amino-acid chain; its full sequence is UvrABC system protein B (679 aa).

In terms of domain architecture, Helicase ATP-binding spans 25–412 (QGVNSGEEFQ…EGKFIEQVIR (388 aa)). 38-45 (GATGTGKT) lines the ATP pocket. Positions 91–114 (YYDYYQPEAYVPVSDTYIAKTASI) match the Beta-hairpin motif. The region spanning 429 to 583 (QIDDLLSEIR…KKYNQINGIT (155 aa)) is the Helicase C-terminal domain. The UVR domain maps to 639–674 (PSLIDKLENKMKDAAKELNFEEAANLRDRIKKLRQK).

The protein belongs to the UvrB family. As to quaternary structure, forms a heterotetramer with UvrA during the search for lesions. Interacts with UvrC in an incision complex.

Its subcellular location is the cytoplasm. Its function is as follows. The UvrABC repair system catalyzes the recognition and processing of DNA lesions. A damage recognition complex composed of 2 UvrA and 2 UvrB subunits scans DNA for abnormalities. Upon binding of the UvrA(2)B(2) complex to a putative damaged site, the DNA wraps around one UvrB monomer. DNA wrap is dependent on ATP binding by UvrB and probably causes local melting of the DNA helix, facilitating insertion of UvrB beta-hairpin between the DNA strands. Then UvrB probes one DNA strand for the presence of a lesion. If a lesion is found the UvrA subunits dissociate and the UvrB-DNA preincision complex is formed. This complex is subsequently bound by UvrC and the second UvrB is released. If no lesion is found, the DNA wraps around the other UvrB subunit that will check the other stand for damage. The polypeptide is UvrABC system protein B (Prochlorococcus marinus subsp. pastoris (strain CCMP1986 / NIES-2087 / MED4)).